We begin with the raw amino-acid sequence, 470 residues long: 3-isopropylmalate dehydratase large subunit (470 aa).

Residues cysteine 349, cysteine 409, and cysteine 412 each coordinate [4Fe-4S] cluster.

It belongs to the aconitase/IPM isomerase family. LeuC type 1 subfamily. In terms of assembly, heterodimer of LeuC and LeuD. Requires [4Fe-4S] cluster as cofactor.

It catalyses the reaction (2R,3S)-3-isopropylmalate = (2S)-2-isopropylmalate. It functions in the pathway amino-acid biosynthesis; L-leucine biosynthesis; L-leucine from 3-methyl-2-oxobutanoate: step 2/4. Its function is as follows. Catalyzes the isomerization between 2-isopropylmalate and 3-isopropylmalate, via the formation of 2-isopropylmaleate. The sequence is that of 3-isopropylmalate dehydratase large subunit from Afipia carboxidovorans (strain ATCC 49405 / DSM 1227 / KCTC 32145 / OM5) (Oligotropha carboxidovorans).